We begin with the raw amino-acid sequence, 260 residues long: uncharacterized protein (260 aa).

The N-terminal stretch at 1–22 (MKHSKKLLLCISFLLITIFISG) is a signal peptide. A lipid anchor (N-palmitoyl cysteine) is attached at cysteine 23. Residue cysteine 23 is the site of S-diacylglycerol cysteine attachment.

Belongs to the staphylococcal tandem lipoprotein family.

Its subcellular location is the cell membrane. This is an uncharacterized protein from Staphylococcus epidermidis (strain ATCC 35984 / DSM 28319 / BCRC 17069 / CCUG 31568 / BM 3577 / RP62A).